Here is a 392-residue protein sequence, read N- to C-terminus: Phospho-N-acetylmuramoyl-pentapeptide-transferase (392 aa).

10 helical membrane passes run 29 to 49 (AVLA…WVIG), 76 to 96 (TMGG…WFDL), 100 to 120 (FVWI…VDDW), 137 to 157 (YLWQ…CISE), 192 to 212 (AVSY…VIVG), 225 to 245 (GLAI…AYVT), 262 to 282 (SGEL…FLWF), 289 to 309 (VFMG…IAII), 314 to 334 (IVLA…MLQV), and 369 to 389 (QVVV…LSTL).

The protein belongs to the glycosyltransferase 4 family. MraY subfamily. The cofactor is Mg(2+).

It is found in the cell inner membrane. It carries out the reaction UDP-N-acetyl-alpha-D-muramoyl-L-alanyl-gamma-D-glutamyl-meso-2,6-diaminopimeloyl-D-alanyl-D-alanine + di-trans,octa-cis-undecaprenyl phosphate = di-trans,octa-cis-undecaprenyl diphospho-N-acetyl-alpha-D-muramoyl-L-alanyl-D-glutamyl-meso-2,6-diaminopimeloyl-D-alanyl-D-alanine + UMP. The protein operates within cell wall biogenesis; peptidoglycan biosynthesis. In terms of biological role, catalyzes the initial step of the lipid cycle reactions in the biosynthesis of the cell wall peptidoglycan: transfers peptidoglycan precursor phospho-MurNAc-pentapeptide from UDP-MurNAc-pentapeptide onto the lipid carrier undecaprenyl phosphate, yielding undecaprenyl-pyrophosphoryl-MurNAc-pentapeptide, known as lipid I. In Verminephrobacter eiseniae (strain EF01-2), this protein is Phospho-N-acetylmuramoyl-pentapeptide-transferase.